A 108-amino-acid chain; its full sequence is Thiosulfate sulfurtransferase GlpE (108 aa).

In terms of domain architecture, Rhodanese spans 17–105 (QEKEAVLVDI…WQRQFPAEVA (89 aa)). Cys-65 acts as the Cysteine persulfide intermediate in catalysis.

It belongs to the GlpE family.

The protein localises to the cytoplasm. The enzyme catalyses thiosulfate + hydrogen cyanide = thiocyanate + sulfite + 2 H(+). It carries out the reaction thiosulfate + [thioredoxin]-dithiol = [thioredoxin]-disulfide + hydrogen sulfide + sulfite + 2 H(+). Transferase that catalyzes the transfer of sulfur from thiosulfate to thiophilic acceptors such as cyanide or dithiols. May function in a CysM-independent thiosulfate assimilation pathway by catalyzing the conversion of thiosulfate to sulfite, which can then be used for L-cysteine biosynthesis. The polypeptide is Thiosulfate sulfurtransferase GlpE (Escherichia coli O139:H28 (strain E24377A / ETEC)).